We begin with the raw amino-acid sequence, 186 residues long: ATP synthase subunit b (186 aa).

Residues 28–48 traverse the membrane as a helical segment; the sequence is IVWSIIPFAVILFVFWKFVLP.

This sequence belongs to the ATPase B chain family. In terms of assembly, F-type ATPases have 2 components, F(1) - the catalytic core - and F(0) - the membrane proton channel. F(1) has five subunits: alpha(3), beta(3), gamma(1), delta(1), epsilon(1). F(0) has three main subunits: a(1), b(2) and c(10-14). The alpha and beta chains form an alternating ring which encloses part of the gamma chain. F(1) is attached to F(0) by a central stalk formed by the gamma and epsilon chains, while a peripheral stalk is formed by the delta and b chains.

It is found in the cell membrane. Its function is as follows. F(1)F(0) ATP synthase produces ATP from ADP in the presence of a proton or sodium gradient. F-type ATPases consist of two structural domains, F(1) containing the extramembraneous catalytic core and F(0) containing the membrane proton channel, linked together by a central stalk and a peripheral stalk. During catalysis, ATP synthesis in the catalytic domain of F(1) is coupled via a rotary mechanism of the central stalk subunits to proton translocation. Component of the F(0) channel, it forms part of the peripheral stalk, linking F(1) to F(0). The chain is ATP synthase subunit b from Corynebacterium jeikeium (strain K411).